A 239-amino-acid chain; its full sequence is Aspartate/glutamate leucyltransferase (239 aa).

The protein belongs to the R-transferase family. Bpt subfamily.

The protein resides in the cytoplasm. It carries out the reaction N-terminal L-glutamyl-[protein] + L-leucyl-tRNA(Leu) = N-terminal L-leucyl-L-glutamyl-[protein] + tRNA(Leu) + H(+). The enzyme catalyses N-terminal L-aspartyl-[protein] + L-leucyl-tRNA(Leu) = N-terminal L-leucyl-L-aspartyl-[protein] + tRNA(Leu) + H(+). Functions in the N-end rule pathway of protein degradation where it conjugates Leu from its aminoacyl-tRNA to the N-termini of proteins containing an N-terminal aspartate or glutamate. This Campylobacter jejuni subsp. jejuni serotype O:6 (strain 81116 / NCTC 11828) protein is Aspartate/glutamate leucyltransferase.